The chain runs to 290 residues: 4-hydroxy-tetrahydrodipicolinate synthase (290 aa).

Residue T44 coordinates pyruvate. Catalysis depends on Y132, which acts as the Proton donor/acceptor. K160 (schiff-base intermediate with substrate) is an active-site residue. Pyruvate is bound at residue I202.

It belongs to the DapA family. In terms of assembly, homotetramer; dimer of dimers.

The protein localises to the cytoplasm. It catalyses the reaction L-aspartate 4-semialdehyde + pyruvate = (2S,4S)-4-hydroxy-2,3,4,5-tetrahydrodipicolinate + H2O + H(+). The protein operates within amino-acid biosynthesis; L-lysine biosynthesis via DAP pathway; (S)-tetrahydrodipicolinate from L-aspartate: step 3/4. Catalyzes the condensation of (S)-aspartate-beta-semialdehyde [(S)-ASA] and pyruvate to 4-hydroxy-tetrahydrodipicolinate (HTPA). The polypeptide is 4-hydroxy-tetrahydrodipicolinate synthase (Geobacter sp. (strain M21)).